A 689-amino-acid chain; its full sequence is Glycine--tRNA ligase beta subunit (689 aa).

It belongs to the class-II aminoacyl-tRNA synthetase family. In terms of assembly, tetramer of two alpha and two beta subunits.

Its subcellular location is the cytoplasm. It carries out the reaction tRNA(Gly) + glycine + ATP = glycyl-tRNA(Gly) + AMP + diphosphate. This is Glycine--tRNA ligase beta subunit from Mannheimia succiniciproducens (strain KCTC 0769BP / MBEL55E).